A 353-amino-acid chain; its full sequence is Nucleotide-binding protein sce5766 (353 aa).

27–34 (GLSGAGKS) is a binding site for ATP. A GTP-binding site is contributed by 76–79 (DVRV). A disordered region spans residues 310-353 (SGVPSGVGEGMAGAPGVDLRLAQPGATPSEPRPASDTSVTGGER). The segment covering 344-353 (SDTSVTGGER) has biased composition (polar residues).

Belongs to the RapZ-like family.

Displays ATPase and GTPase activities. This chain is Nucleotide-binding protein sce5766, found in Sorangium cellulosum (strain So ce56) (Polyangium cellulosum (strain So ce56)).